Here is a 172-residue protein sequence, read N- to C-terminus: Protein YdeJ (172 aa).

The protein belongs to the CinA family.

In terms of biological role, does not have nicotinamide-nucleotide (NMN) amidohydrolase activity. The sequence is that of Protein YdeJ (ydeJ) from Escherichia coli (strain K12).